A 75-amino-acid chain; its full sequence is Large ribosomal subunit protein bL28 (75 aa).

Positions 1-21 (MARVCQVTGKRPMSGNKRSHA) are disordered.

Belongs to the bacterial ribosomal protein bL28 family.

In Blochmanniella pennsylvanica (strain BPEN), this protein is Large ribosomal subunit protein bL28.